We begin with the raw amino-acid sequence, 482 residues long: Dual specificity protein phosphatase 10 (482 aa).

Positions 168–285 (PSQGPVIIDC…FKQNHENLCD (118 aa)) constitute a Rhodanese domain. Residues 199-215 (KISRRRLQQGKITVLDL) are interaction with MAP kinases. The Tyrosine-protein phosphatase domain occupies 321-464 (ELTPILPFLF…LLEFEEDLNN (144 aa)). C408 serves as the catalytic Phosphocysteine intermediate.

The protein belongs to the protein-tyrosine phosphatase family. Non-receptor class dual specificity subfamily. In terms of assembly, monomer. Interacts with MAPK14.

The protein resides in the cytoplasm. Its subcellular location is the nucleus. The catalysed reaction is O-phospho-L-tyrosyl-[protein] + H2O = L-tyrosyl-[protein] + phosphate. The enzyme catalyses O-phospho-L-seryl-[protein] + H2O = L-seryl-[protein] + phosphate. It carries out the reaction O-phospho-L-threonyl-[protein] + H2O = L-threonyl-[protein] + phosphate. Functionally, protein phosphatase involved in the inactivation of MAP kinases. Has a specificity for the MAPK11/MAPK12/MAPK13/MAPK14 subfamily. It preferably dephosphorylates p38. The polypeptide is Dual specificity protein phosphatase 10 (DUSP10) (Bos taurus (Bovine)).